The primary structure comprises 553 residues: Glycerol kinase 2 (553 aa).

Thr20 lines the substrate pocket. An ATP-binding site is contributed by Arg24. Positions 94, 148, and 259 each coordinate substrate. ATP is bound by residues Thr281, Gly326, and Gly427–Asn431. Residues Ile526–Ala546 traverse the membrane as a helical segment.

This sequence belongs to the FGGY kinase family. As to quaternary structure, interacts with ARMC12. Interacts with PLD6. As to expression, testis-specific. Expressed in the midpiece of spermatozoa.

The protein localises to the mitochondrion outer membrane. It is found in the cytoplasm. It carries out the reaction glycerol + ATP = sn-glycerol 3-phosphate + ADP + H(+). It participates in polyol metabolism; glycerol degradation via glycerol kinase pathway; sn-glycerol 3-phosphate from glycerol: step 1/1. In terms of biological role, key enzyme in the regulation of glycerol uptake and metabolism. Essential for male fertility and sperm mitochondrial sheath formation. Required for proper arrangement of crescent-like mitochondria to form the mitochondrial sheath during spermatogenesis. Can induce mitochondrial clustering through interactions with PLD6 and up-regulation of phosphatidic acid synthesis in the mitochondria. The protein is Glycerol kinase 2 (GK2) of Homo sapiens (Human).